Consider the following 420-residue polypeptide: Putative phosphate permease HI_1604 (420 aa).

The next 12 membrane-spanning stretches (helical) occupy residues 8–28, 49–69, 88–108, 112–132, 145–165, 185–205, 216–236, 250–270, 300–320, 343–363, 370–390, and 393–413; these read GSWL…GIGA, AIII…GEVT, ILAL…FIAT, WPVS…CITI, IVGS…AIFA, GPYY…KKGL, ETLI…HFYF, FGAV…AMAF, GGAL…VGLI, FAAQ…GLPI, VGAI…LTVI, and IISS…IIFY.

This sequence belongs to the inorganic phosphate transporter (PiT) (TC 2.A.20) family.

It is found in the cell inner membrane. In terms of biological role, potential transporter for phosphate. This Haemophilus influenzae (strain ATCC 51907 / DSM 11121 / KW20 / Rd) protein is Putative phosphate permease HI_1604.